The chain runs to 317 residues: Melanocyte-stimulating hormone receptor (317 aa).

Topologically, residues 1–37 (MSVQGPQRRLLGSLNSTSPAAPRLGLAANQTGPRCLE) are extracellular. Residues Asn-15 and Asn-29 are each glycosylated (N-linked (GlcNAc...) asparagine). A helical membrane pass occupies residues 38–63 (VSVPDGLFLSLGLVSVVENVLVVAAI). Over 64–72 (AKNRNLHSP) the chain is Cytoplasmic. The chain crosses the membrane as a helical span at residues 73–93 (MYYFICCLAVSDLLVSVSSVL). The Extracellular segment spans residues 94–118 (ETAVMLLLEAGTLAGRAAVVQQLDD). Residues 119 to 140 (VIDVLVCGAMVSSLCFLGAIAV) form a helical membrane-spanning segment. Over 141–163 (DRYISIFYALRYHSIVTLPRAWR) the chain is Cytoplasmic. A helical transmembrane segment spans residues 164–183 (AISAIWVASVLSSTLFIAYY). Over 184-191 (DHTAVLLC) the chain is Extracellular. A helical transmembrane segment spans residues 192-211 (LVSFFVAMLVLMAVLYVHML). Residues 212–240 (ARACQHARGIARLHKRQRPVHQGLGLKGA) lie on the Cytoplasmic side of the membrane. The helical transmembrane segment at 241–266 (ATLTILLGIFFLCWGPFFLHLSLMVL) threads the bilayer. At 267-279 (CPRHPICGCVFKN) the chain is on the extracellular side. The helical transmembrane segment at 280–300 (FNLFLTLIICNSIVDPLIYAF) threads the bilayer. At 301–317 (RSQELRKTLQEVLLCSW) the chain is on the cytoplasmic side. Residue Cys-315 is the site of S-palmitoyl cysteine attachment.

This sequence belongs to the G-protein coupled receptor 1 family. As to quaternary structure, interacts with MGRN1, but does not undergo MGRN1-mediated ubiquitination; this interaction competes with GNAS-binding and thus inhibits agonist-induced cAMP production. Interacts with OPN3; the interaction results in a decrease in MC1R-mediated cAMP signaling and ultimately a decrease in melanin production in melanocytes.

Its subcellular location is the cell membrane. Functionally, receptor for MSH (alpha, beta and gamma) and ACTH. The activity of this receptor is mediated by G proteins which activate adenylate cyclase. Mediates melanogenesis, the production of eumelanin (black/brown) and phaeomelanin (red/yellow), via regulation of cAMP signaling in melanocytes. This is Melanocyte-stimulating hormone receptor (MC1R) from Panthera onca (Jaguar).